A 150-amino-acid chain; its full sequence is D-aminoacyl-tRNA deacylase (150 aa).

Positions 138 to 139 (GP) match the Gly-cisPro motif, important for rejection of L-amino acids motif.

Belongs to the DTD family. Homodimer.

It localises to the cytoplasm. The enzyme catalyses glycyl-tRNA(Ala) + H2O = tRNA(Ala) + glycine + H(+). The catalysed reaction is a D-aminoacyl-tRNA + H2O = a tRNA + a D-alpha-amino acid + H(+). In terms of biological role, an aminoacyl-tRNA editing enzyme that deacylates mischarged D-aminoacyl-tRNAs. Also deacylates mischarged glycyl-tRNA(Ala), protecting cells against glycine mischarging by AlaRS. Acts via tRNA-based rather than protein-based catalysis; rejects L-amino acids rather than detecting D-amino acids in the active site. By recycling D-aminoacyl-tRNA to D-amino acids and free tRNA molecules, this enzyme counteracts the toxicity associated with the formation of D-aminoacyl-tRNA entities in vivo and helps enforce protein L-homochirality. This Chromobacterium violaceum (strain ATCC 12472 / DSM 30191 / JCM 1249 / CCUG 213 / NBRC 12614 / NCIMB 9131 / NCTC 9757 / MK) protein is D-aminoacyl-tRNA deacylase.